A 244-amino-acid polypeptide reads, in one-letter code: Small ribosomal subunit protein eS4 (244 aa).

The S4 RNA-binding domain maps to 43-106 (LPLLLVVRDI…DENYLVLFDE (64 aa)).

Belongs to the eukaryotic ribosomal protein eS4 family.

The protein is Small ribosomal subunit protein eS4 of Methanococcus maripaludis (strain C6 / ATCC BAA-1332).